A 591-amino-acid polypeptide reads, in one-letter code: Protein misato homolog 1 (591 aa).

It belongs to the misato family.

The protein localises to the mitochondrion outer membrane. It localises to the cytoplasm. Involved in the regulation of mitochondrial distribution and morphology. Required for mitochondrial fusion and mitochondrial network formation. The polypeptide is Protein misato homolog 1 (msto1) (Danio rerio (Zebrafish)).